The following is a 384-amino-acid chain: uncharacterized protein (384 aa).

Positions 137 to 303 constitute an Integrase catalytic domain; that stretch reads EHDAPNRLWQ…VPGSRYQPSA (167 aa).

This is an uncharacterized protein from Escherichia coli (strain K12).